Consider the following 549-residue polypeptide: Cation/acetate symporter ActP (549 aa).

The next 13 membrane-spanning stretches (helical) occupy residues 33 to 53 (WQAIIMFLIFVVFTLGITYWA), 77 to 97 (LAIAGDYMSAASFLGISALVF), 103 to 123 (GLIYSLGFLVGWPIILFLIAE), 148 to 168 (ILSACGSLVVVALYLIAQMVG), 183 to 203 (IAVVLVGVLMMMYVLFGGMLA), 206 to 226 (WVQIIKAVLLLFGASFMAFMV), 262 to 282 (ISALSLGLGLMFGTAGLPHIL), 303 to 323 (GFMGYFYILTFIIGFGAIMLV), 355 to 375 (LFLGFISAVAFATILAVVAGL), 404 to 424 (VSKITVLILGVIAIILGVLFE), 428 to 448 (IAFMVGLAFAIAASCNFPIIL), 464 to 484 (GGWLGLITAVVLMILGPTIWV), and 493 to 513 (IFPYEYPALFSISVAFLGIWF).

This sequence belongs to the sodium:solute symporter (SSF) (TC 2.A.21) family.

Its subcellular location is the cell inner membrane. In terms of biological role, transports acetate. The polypeptide is Cation/acetate symporter ActP (Escherichia coli O8 (strain IAI1)).